The sequence spans 443 residues: Mevalonate kinase (443 aa).

ATP-binding positions include Lys12, Ser138, and 143-149 (GAGLGSS). Positions 149 and 191 each coordinate Mg(2+). The active-site Proton acceptor is Asp202.

It belongs to the GHMP kinase family. Mevalonate kinase subfamily. As to quaternary structure, homodimer. Requires Mg(2+) as cofactor.

It is found in the cytoplasm. The protein localises to the cytosol. It catalyses the reaction (R)-mevalonate + ATP = (R)-5-phosphomevalonate + ADP + H(+). Its pathway is isoprenoid biosynthesis; isopentenyl diphosphate biosynthesis via mevalonate pathway; isopentenyl diphosphate from (R)-mevalonate: step 1/3. Farnesyl pyrophosphate and geranyl pyrophosphate inhibit mevalonate kinase by binding competitively at the ATP-binding site. Its function is as follows. Mevalonate kinase; part of the second module of ergosterol biosynthesis pathway that includes the middle steps of the pathway. ERG12 converts mevalonate into 5-phosphomevalonate. The second module is carried out in the vacuole and involves the formation of farnesyl diphosphate, which is also an important intermediate in the biosynthesis of ubiquinone, dolichol, heme and prenylated proteins. Activity by the mevalonate kinase ERG12 first converts mevalonate into 5-phosphomevalonate. 5-phosphomevalonate is then further converted to 5-diphosphomevalonate by the phosphomevalonate kinase ERG8. The diphosphomevalonate decarboxylase MVD1/ERG19 then produces isopentenyl diphosphate. The isopentenyl-diphosphate delta-isomerase IDI1 then catalyzes the 1,3-allylic rearrangement of the homoallylic substrate isopentenyl (IPP) to its highly electrophilic allylic isomer, dimethylallyl diphosphate (DMAPP). Finally the farnesyl diphosphate synthase ERG20 catalyzes the sequential condensation of isopentenyl pyrophosphate with dimethylallyl pyrophosphate, and then with the resultant geranylpyrophosphate to the ultimate product farnesyl pyrophosphate. This Saccharomyces cerevisiae (strain ATCC 204508 / S288c) (Baker's yeast) protein is Mevalonate kinase.